A 437-amino-acid chain; its full sequence is Serine hydroxymethyltransferase (437 aa).

(6S)-5,6,7,8-tetrahydrofolate contacts are provided by residues Leu130 and 134–136 (GHL). N6-(pyridoxal phosphate)lysine is present on Lys239. Residue 363 to 365 (TPF) participates in (6S)-5,6,7,8-tetrahydrofolate binding.

The protein belongs to the SHMT family. Homodimer. The cofactor is pyridoxal 5'-phosphate.

It localises to the cytoplasm. It carries out the reaction (6R)-5,10-methylene-5,6,7,8-tetrahydrofolate + glycine + H2O = (6S)-5,6,7,8-tetrahydrofolate + L-serine. It functions in the pathway one-carbon metabolism; tetrahydrofolate interconversion. Its pathway is amino-acid biosynthesis; glycine biosynthesis; glycine from L-serine: step 1/1. Its function is as follows. Catalyzes the reversible interconversion of serine and glycine with tetrahydrofolate (THF) serving as the one-carbon carrier. This reaction serves as the major source of one-carbon groups required for the biosynthesis of purines, thymidylate, methionine, and other important biomolecules. Also exhibits THF-independent aldolase activity toward beta-hydroxyamino acids, producing glycine and aldehydes, via a retro-aldol mechanism. The chain is Serine hydroxymethyltransferase from Bartonella henselae (strain ATCC 49882 / DSM 28221 / CCUG 30454 / Houston 1) (Rochalimaea henselae).